The sequence spans 524 residues: Serine/threonine-protein phosphatase 2A 56 kDa regulatory subunit gamma isoform (524 aa).

The residue at position 1 (methionine 1) is an N-acetylmethionine. The segment at 476 to 508 is disordered; that stretch reads SDEARQAQKELKKDRPLVRRKSELPQDPHTEKA.

This sequence belongs to the phosphatase 2A regulatory subunit B56 family. As to quaternary structure, PP2A consists of a common heterodimeric core enzyme, composed of PPP2CA a 36 kDa catalytic subunit (subunit C) and PPP2R1A a 65 kDa constant regulatory subunit (PR65 or subunit A), that associates with a variety of regulatory subunits. Proteins that associate with the core dimer include three families of regulatory subunits B (the R2/B/PR55/B55, R3/B''/PR72/PR130/PR59 and R5/B'/B56 families), the 48 kDa variable regulatory subunit, viral proteins, and cell signaling molecules. Interacts with SGO1. Interacts with SGO1; the interaction is direct. May interact with TP53. Interacts with IER3 and/or ERK kinases; regulates ERK dephosphorylation. Interacts with CIP2A; this interaction stabilizes CIP2A. Highest levels in heart, liver and brain. Lower levels in skeletal muscle, spleen, kidney and lung. Isoform 4 is testis-specific.

The protein resides in the nucleus. It is found in the chromosome. The protein localises to the centromere. The B regulatory subunit might modulate substrate selectivity and catalytic activity, and might also direct the localization of the catalytic enzyme to a particular subcellular compartment. The PP2A-PPP2R5C holoenzyme may activate TP53 and play a role in DNA damage-induced inhibition of cell proliferation. PP2A-PPP2R5C may also regulate the ERK signaling pathway through ERK dephosphorylation. The polypeptide is Serine/threonine-protein phosphatase 2A 56 kDa regulatory subunit gamma isoform (Ppp2r5c) (Mus musculus (Mouse)).